Here is a 92-residue protein sequence, read N- to C-terminus: Small ribosomal subunit protein uS19c (92 aa).

Belongs to the universal ribosomal protein uS19 family.

Its subcellular location is the plastid. The protein resides in the chloroplast. Protein S19 forms a complex with S13 that binds strongly to the 16S ribosomal RNA. The chain is Small ribosomal subunit protein uS19c from Dioscorea elephantipes (Elephant's foot yam).